Here is a 352-residue protein sequence, read N- to C-terminus: Glutamine synthetase (352 aa).

In terms of domain architecture, GS beta-grasp spans Tyr3–Thr82. The region spanning Thr87–Val352 is the GS catalytic domain. The Mg(2+) site is built by Glu108 and Glu110. Residue Glu164 participates in ATP binding. Residues Glu169 and Glu176 each contribute to the Mg(2+) site. Residue Glu272 coordinates L-glutamate.

The protein belongs to the glutamine synthetase family. As to quaternary structure, homooctamer and homotetramer. Mg(2+) serves as cofactor.

The protein resides in the cytoplasm. It catalyses the reaction L-glutamate + NH4(+) + ATP = L-glutamine + ADP + phosphate + H(+). In terms of biological role, catalyzes the ATP-dependent biosynthesis of glutamine from glutamate and ammonia. The chain is Glutamine synthetase from Frankia alni.